A 161-amino-acid chain; its full sequence is ATP synthase subunit b' (161 aa).

The helical transmembrane segment at 30–47 (VMAIQFLVLAALLNKLFY) threads the bilayer.

Belongs to the ATPase B chain family. In terms of assembly, F-type ATPases have 2 components, F(1) - the catalytic core - and F(0) - the membrane proton channel. F(1) has five subunits: alpha(3), beta(3), gamma(1), delta(1), epsilon(1). F(0) has four main subunits: a(1), b(1), b'(1) and c(10-14). The alpha and beta chains form an alternating ring which encloses part of the gamma chain. F(1) is attached to F(0) by a central stalk formed by the gamma and epsilon chains, while a peripheral stalk is formed by the delta, b and b' chains.

The protein localises to the cellular thylakoid membrane. In terms of biological role, f(1)F(0) ATP synthase produces ATP from ADP in the presence of a proton or sodium gradient. F-type ATPases consist of two structural domains, F(1) containing the extramembraneous catalytic core and F(0) containing the membrane proton channel, linked together by a central stalk and a peripheral stalk. During catalysis, ATP synthesis in the catalytic domain of F(1) is coupled via a rotary mechanism of the central stalk subunits to proton translocation. Component of the F(0) channel, it forms part of the peripheral stalk, linking F(1) to F(0). The b'-subunit is a diverged and duplicated form of b found in plants and photosynthetic bacteria. This is ATP synthase subunit b' from Picosynechococcus sp. (strain ATCC 27264 / PCC 7002 / PR-6) (Agmenellum quadruplicatum).